Reading from the N-terminus, the 432-residue chain is Adenylosuccinate synthetase (432 aa).

GTP is bound by residues G13 to K19 and G41 to T43. Catalysis depends on D14, which acts as the Proton acceptor. The Mg(2+) site is built by D14 and G41. Residues D14–K17, N39–H42, T130, R144, Q225, T240, and R304 each bind IMP. H42 (proton donor) is an active-site residue. A300 to R306 is a binding site for substrate. GTP-binding positions include R306, K332–D334, and S415–G417.

This sequence belongs to the adenylosuccinate synthetase family. Homodimer. The cofactor is Mg(2+).

It is found in the cytoplasm. It catalyses the reaction IMP + L-aspartate + GTP = N(6)-(1,2-dicarboxyethyl)-AMP + GDP + phosphate + 2 H(+). The protein operates within purine metabolism; AMP biosynthesis via de novo pathway; AMP from IMP: step 1/2. Its function is as follows. Plays an important role in the de novo pathway of purine nucleotide biosynthesis. Catalyzes the first committed step in the biosynthesis of AMP from IMP. In Pectobacterium carotovorum subsp. carotovorum (strain PC1), this protein is Adenylosuccinate synthetase.